We begin with the raw amino-acid sequence, 310 residues long: Probable manganese-dependent inorganic pyrophosphatase (310 aa).

Mn(2+)-binding residues include His10, Asp14, Asp16, Asp75, His97, and Asp149.

The protein belongs to the PPase class C family. Mn(2+) serves as cofactor.

The protein localises to the cytoplasm. It carries out the reaction diphosphate + H2O = 2 phosphate + H(+). This chain is Probable manganese-dependent inorganic pyrophosphatase, found in Clostridium acetobutylicum (strain ATCC 824 / DSM 792 / JCM 1419 / IAM 19013 / LMG 5710 / NBRC 13948 / NRRL B-527 / VKM B-1787 / 2291 / W).